We begin with the raw amino-acid sequence, 156 residues long: Small ribosomal subunit protein uS7 (156 aa).

It belongs to the universal ribosomal protein uS7 family. As to quaternary structure, part of the 30S ribosomal subunit. Contacts proteins S9 and S11.

In terms of biological role, one of the primary rRNA binding proteins, it binds directly to 16S rRNA where it nucleates assembly of the head domain of the 30S subunit. Is located at the subunit interface close to the decoding center, probably blocks exit of the E-site tRNA. This is Small ribosomal subunit protein uS7 from Thermoanaerobacter pseudethanolicus (strain ATCC 33223 / 39E) (Clostridium thermohydrosulfuricum).